We begin with the raw amino-acid sequence, 398 residues long: Succinate--CoA ligase [ADP-forming] subunit beta (398 aa).

The ATP-grasp domain occupies 9-253; it reads KELLKSYGVA…EAEEDPKELE (245 aa). ATP-binding positions include Lys46, 53–55, Glu108, Cys111, and Glu116; that span reads GRG. Residues Asn208 and Asp222 each coordinate Mg(2+). Residues Asn273 and 330 to 332 contribute to the substrate site; that span reads GIM.

This sequence belongs to the succinate/malate CoA ligase beta subunit family. As to quaternary structure, heterotetramer of two alpha and two beta subunits. Requires Mg(2+) as cofactor.

It carries out the reaction succinate + ATP + CoA = succinyl-CoA + ADP + phosphate. It catalyses the reaction GTP + succinate + CoA = succinyl-CoA + GDP + phosphate. It functions in the pathway carbohydrate metabolism; tricarboxylic acid cycle; succinate from succinyl-CoA (ligase route): step 1/1. Its function is as follows. Succinyl-CoA synthetase functions in the citric acid cycle (TCA), coupling the hydrolysis of succinyl-CoA to the synthesis of either ATP or GTP and thus represents the only step of substrate-level phosphorylation in the TCA. The beta subunit provides nucleotide specificity of the enzyme and binds the substrate succinate, while the binding sites for coenzyme A and phosphate are found in the alpha subunit. The chain is Succinate--CoA ligase [ADP-forming] subunit beta from Acidiphilium cryptum (strain JF-5).